The primary structure comprises 263 residues: Endonuclease 8 (263 aa).

The Schiff-base intermediate with DNA role is filled by Pro-2. Catalysis depends on Glu-3, which acts as the Proton donor. The active-site Proton donor; for beta-elimination activity is the Lys-53. The DNA site is built by Gln-70, Arg-125, and Asn-169. An FPG-type zinc finger spans residues 229 to 263; that stretch reads KVFHRDGEACERCGGIIEKTTLSSRPFYWCPHCQK. Arg-253 functions as the Proton donor; for delta-elimination activity in the catalytic mechanism.

Belongs to the FPG family. It depends on Zn(2+) as a cofactor.

The enzyme catalyses 2'-deoxyribonucleotide-(2'-deoxyribose 5'-phosphate)-2'-deoxyribonucleotide-DNA = a 3'-end 2'-deoxyribonucleotide-(2,3-dehydro-2,3-deoxyribose 5'-phosphate)-DNA + a 5'-end 5'-phospho-2'-deoxyribonucleoside-DNA + H(+). Functionally, involved in base excision repair of DNA damaged by oxidation or by mutagenic agents. Acts as a DNA glycosylase that recognizes and removes damaged bases. Has a preference for oxidized pyrimidines, such as thymine glycol, 5,6-dihydrouracil and 5,6-dihydrothymine. Has AP (apurinic/apyrimidinic) lyase activity and introduces nicks in the DNA strand. Cleaves the DNA backbone by beta-delta elimination to generate a single-strand break at the site of the removed base with both 3'- and 5'-phosphates. The polypeptide is Endonuclease 8 (Salmonella agona (strain SL483)).